A 118-amino-acid chain; its full sequence is Immunoglobulin lambda variable 2-8 (118 aa).

The N-terminal stretch at 1–19 (MAWALLLLTLLTQGTGSWA) is a signal peptide. Gln-20 bears the Pyrrolidone carboxylic acid mark. The framework-1 stretch occupies residues 20-44 (QSALTQPPSASGSPGQSVTISCTGT). The Ig-like domain maps to 20 to 118 (QSALTQPPSA…CSSYAGSNNF (99 aa)). Cys-41 and Cys-109 form a disulfide bridge. The interval 45–53 (SSDVGGYNY) is complementarity-determining-1. The segment at 54–70 (VSWYQQHPGKAPKLMIY) is framework-2. Residues 71–73 (EVS) are complementarity-determining-2. Residues 74 to 109 (KRPSGVPDRFSGSKSGNTASLTVSGLQAEDEADYYC) are framework-3. Positions 76–97 (PSGVPDRFSGSKSGNTASLTVS) are disordered. A compositionally biased stretch (polar residues) spans 85-97 (GSKSGNTASLTVS). Positions 110 to 118 (SSYAGSNNF) are complementarity-determining-3.

Immunoglobulins are composed of two identical heavy chains and two identical light chains; disulfide-linked.

Its subcellular location is the secreted. The protein resides in the cell membrane. In terms of biological role, v region of the variable domain of immunoglobulin light chains that participates in the antigen recognition. Immunoglobulins, also known as antibodies, are membrane-bound or secreted glycoproteins produced by B lymphocytes. In the recognition phase of humoral immunity, the membrane-bound immunoglobulins serve as receptors which, upon binding of a specific antigen, trigger the clonal expansion and differentiation of B lymphocytes into immunoglobulins-secreting plasma cells. Secreted immunoglobulins mediate the effector phase of humoral immunity, which results in the elimination of bound antigens. The antigen binding site is formed by the variable domain of one heavy chain, together with that of its associated light chain. Thus, each immunoglobulin has two antigen binding sites with remarkable affinity for a particular antigen. The variable domains are assembled by a process called V-(D)-J rearrangement and can then be subjected to somatic hypermutations which, after exposure to antigen and selection, allow affinity maturation for a particular antigen. The polypeptide is Immunoglobulin lambda variable 2-8 (Homo sapiens (Human)).